A 542-amino-acid polypeptide reads, in one-letter code: Neurofilament light polypeptide (542 aa).

S2 is subject to N-acetylserine. A head region spans residues 2 to 93 (SSFSYEPYFS…KSIRTQEKAQ (92 aa)). Residue T21 is glycosylated (O-linked (GlcNAc) threonine). R23 carries the asymmetric dimethylarginine; alternate modification. R23 bears the Omega-N-methylarginine; alternate mark. Residue S27 is glycosylated (O-linked (GlcNAc) serine). R30 carries the omega-N-methylarginine modification. Position 43 is a phosphotyrosine (Y43). Phosphoserine is present on residues S56, S67, and S103. The region spanning 90–401 (EKAQLQDLND…KLLEGEETRL (312 aa)) is the IF rod domain. The tract at residues 94 to 125 (LQDLNDRFASFIERVHELEQQNKVLEAELLVL) is coil 1A. The linker 1 stretch occupies residues 126–138 (RQKHSEPSRFRAL). The coil 1B stretch occupies residues 139–234 (YEQEIRDLRL…KVHEEEIAEL (96 aa)). The interval 235–253 (QAQIQYAQISVEMDVSSKP) is linker 12. Residues 254-272 (DLSAALKDIRAQYEKLAAK) are coil 2A. The interval 273–281 (NMQNAEEWF) is linker 2. A coil 2B region spans residues 282–397 (KSRFTVLTES…AAYRKLLEGE (116 aa)). The epitope; recognized by IF-specific monoclonal antibody stretch occupies residues 382–392 (ALDIEIAAYRK). The segment at 398 to 444 (ETRLSFTSVGSITSGYSQSSQVFGRSAYSGLQSSSYLMSARAFPAYY) is tail, subdomain A. Residues 398–542 (ETRLSFTSVG…GEEQAAKKKD (145 aa)) are tail. The tail, subdomain B (acidic) stretch occupies residues 445–542 (TSHVQEEQSE…GEEQAAKKKD (98 aa)). Residues 451-542 (EQSEVEETIE…GEEQAAKKKD (92 aa)) form a disordered region. At S453 the chain carries Phosphoserine. Residues 460-471 (EATKAEEAKDEP) are compositionally biased toward basic and acidic residues. Residues 472–527 (PSEGEAEEEEKEKEEGEEEEGAEEEEAAKDESEDAKEEEGGEGEEEDTKESEEEEK) are compositionally biased toward acidic residues. S473 and S503 each carry phosphoserine. T519 carries the phosphothreonine modification. A phosphoserine mark is found at S522 and S531. Basic and acidic residues predominate over residues 528 to 542 (KEESAGEEQAAKKKD).

The protein belongs to the intermediate filament family. Forms homodimers (in vitro). Forms heterodimers with NEFH or NEFM; which can further hetero-oligomerize (in vitro). Forms heterodimers with INA (in vitro). Interacts with ARHGEF28. Interacts with TRIM2. Post-translationally, O-glycosylated; contains three N-acetylglucosamine side chains. Phosphorylated in the head and rod regions by the PKC kinase PKN1, leading to the inhibition of polymerization. In terms of processing, ubiquitinated in the presence of TRIM2 and UBE2D1. As to expression, expressed in the dorsal root ganglion neurons (at protein level).

It localises to the cell projection. The protein localises to the axon. It is found in the cytoplasm. The protein resides in the cytoskeleton. Neurofilaments usually contain three intermediate filament proteins: NEFL, NEFM, and NEFH which are involved in the maintenance of neuronal caliber. May additionally cooperate with the neuronal intermediate filament proteins PRPH and INA to form neuronal filamentous networks. This Rattus norvegicus (Rat) protein is Neurofilament light polypeptide (Nefl).